The chain runs to 177 residues: Cytidylate kinase (177 aa).

7-15 (GSPGSGTTT) is an ATP binding site.

Belongs to the cytidylate kinase family. Type 2 subfamily.

Its subcellular location is the cytoplasm. It catalyses the reaction CMP + ATP = CDP + ADP. The enzyme catalyses dCMP + ATP = dCDP + ADP. The polypeptide is Cytidylate kinase (Methanocorpusculum labreanum (strain ATCC 43576 / DSM 4855 / Z)).